The chain runs to 1036 residues: Protein translocase subunit SecA, chloroplastic (1036 aa).

Residues 1–76 (MESCARSASQ…KIGELMQVRA (76 aa)) constitute a chloroplast transit peptide. Residue 186–193 (MRTGEGKT) participates in ATP binding. A disordered region spans residues 995-1036 (NQEQQQKGKPDSSNVENKRIGDANLNPVSVTESPSSDSPQNT). Basic and acidic residues predominate over residues 1000–1015 (QKGKPDSSNVENKRIG). Positions 1020 to 1036 (NPVSVTESPSSDSPQNT) are enriched in polar residues.

The protein belongs to the SecA family.

It localises to the plastid. The protein resides in the chloroplast stroma. Its subcellular location is the chloroplast thylakoid membrane. It catalyses the reaction ATP + H2O + chloroplast-proteinSide 1 = ADP + phosphate + chloroplast-proteinSide 2.. Has a central role in coupling the hydrolysis of ATP to the transfer of proteins across the thylakoid membrane. The protein is Protein translocase subunit SecA, chloroplastic of Spinacia oleracea (Spinach).